The following is a 270-amino-acid chain: tRNA pseudouridine synthase A (270 aa).

Asp-60 serves as the catalytic Nucleophile. An RNA binding region spans residues 107–111; it reads FHARF. Residue Tyr-118 participates in substrate binding. An interaction with tRNA region spans residues 168-172; that stretch reads QCQSR.

The protein belongs to the tRNA pseudouridine synthase TruA family. In terms of assembly, homodimer.

It carries out the reaction uridine(38/39/40) in tRNA = pseudouridine(38/39/40) in tRNA. Functionally, formation of pseudouridine at positions 38, 39 and 40 in the anticodon stem and loop of transfer RNAs. The chain is tRNA pseudouridine synthase A from Klebsiella pneumoniae subsp. pneumoniae (strain ATCC 700721 / MGH 78578).